Reading from the N-terminus, the 496-residue chain is MAAVPQLSAPSAPARSADGILIGDRQYSEVYLTIDYSLIPEERLSPTPSMSDGLDLNTETDLRILGCELIQSAGILLRLPQVAMATGQVLFHRFFYSKSFVKHSFEIIAMACINLASKIEEAPRRIRDVINVCHHLRQIRAKRTPSPLILDQSYINTKNHVIKAERRILKELGFCVHVKHPHKIIVMYLQVLECERNQTLVQTAWNYMNDCLRTNVFVRFDAETIACACIYLAARALQLSLPNRPHWFLLFGATEENIQDICITTLRLYSRIKPNYEFLEKEVDKRKVALQEAKLKAKGLNPDGTPAILSMGGFSPASKPSSPRDVKTEEKSPNFAKVKREMDDKQSSKSPYNGLRKENKRSRSVSRSRSRTKSRSRSHSPRRHYNNRRRSRSGTYSSRSRSRSRSHSESPRRHHNHGSPHMKLKHRVEDLRGRHAHKRKKSHSPSKSREPSELAKKHRHEHGHHRERRERSRSFERSHKNKHHGSSHSGHGRHRR.

2 cyclin-like regions span residues 68 to 170 and 183 to 267; these read ELIQ…RILK and KIIV…TTLR. The disordered stretch occupies residues 301-496; sequence NPDGTPAILS…SHSGHGRHRR (196 aa). Basic and acidic residues predominate over residues 322 to 347; that stretch reads SPRDVKTEEKSPNFAKVKREMDDKQS. 4 stretches are compositionally biased toward basic residues: residues 358-392, 412-426, 434-446, and 456-468; these read ENKRSRSVSRSRSRTKSRSRSHSPRRHYNNRRRSR, RRHHNHGSPHMKLKH, RHAHKRKKSHSPS, and KKHRHEHGHHRER. An RS region spans residues 363 to 406; sequence RSVSRSRSRTKSRSRSHSPRRHYNNRRRSRSGTYSSRSRSRSRS. Over residues 469–478 the composition is skewed to basic and acidic residues; it reads RERSRSFERS. The span at 479-496 shows a compositional bias: basic residues; the sequence is HKNKHHGSSHSGHGRHRR.

It belongs to the cyclin family. Cyclin L subfamily.

It localises to the nucleus speckle. It is found in the nucleus. The protein resides in the nucleoplasm. Functionally, involved in pre-mRNA splicing. The sequence is that of Cyclin-L1 (ccnl1) from Xenopus laevis (African clawed frog).